The sequence spans 293 residues: uncharacterized protein (293 aa).

Disordered regions lie at residues 1–95 (MFLR…KDKA) and 268–293 (EETA…GRAL). Phosphoserine occurs at positions 34, 35, and 89. 2 stretches are compositionally biased toward basic and acidic residues: residues 85 to 95 (KRMDSLKKDKA) and 277 to 286 (GQGKEAKEQT).

This is an uncharacterized protein from Rattus norvegicus (Rat).